The primary structure comprises 147 residues: Siroheme decarboxylase NirG subunit (147 aa).

The protein belongs to the Ahb/Nir family. Probably forms a complex composed of NirD, NirL, NirG and NirH. All proteins are required for the total conversion of siroheme to didecarboxysiroheme.

The catalysed reaction is siroheme + 2 H(+) = 12,18-didecarboxysiroheme + 2 CO2. It functions in the pathway porphyrin-containing compound metabolism. Functionally, involved in heme d1 biosynthesis. Catalyzes the decarboxylation of siroheme into didecarboxysiroheme. In Stutzerimonas stutzeri (Pseudomonas stutzeri), this protein is Siroheme decarboxylase NirG subunit.